Reading from the N-terminus, the 283-residue chain is MEAVHCFRCYKFPSKQIEFYLTNCMHMFCIECERLCHPPEEEPLKCIQCSKTPIRIVKMGPELPMTIKSMFTPISEEINQYTRDLTRVLTFQHRQRASLSTFLERKVAAFDRLRDAYSEEKTKKEHYKKQLEEAYHLLKSKEHEISKLKKQLAEQAPPPQTPPRSNSLKVASSRSLETPSMMRVFSDSMYETPVQIQRRFTKAQAKAEAEAEAPAKSPGSKAQTTKCTSNYQSHPPASFETPIHHPPKTSMGFTTPANPPHMFPYLKKHEAQREKHKEHRNSQ.

Residues 6-50 (CFRCYKFPSKQIEFYLTNCMHMFCIECERLCHPPEEEPLKCIQCS) form an RING-type zinc finger. Disordered stretches follow at residues 149-175 (KKQLAEQAPPPQTPPRSNSLKVASSRS) and 201-283 (TKAQ…RNSQ). Polar residues predominate over residues 163 to 175 (PRSNSLKVASSRS). Low complexity predominate over residues 202 to 216 (KAQAKAEAEAEAPAK). Over residues 220–235 (SKAQTTKCTSNYQSHP) the composition is skewed to polar residues. Residues 267 to 283 (KKHEAQREKHKEHRNSQ) are compositionally biased toward basic and acidic residues.

Interacts with zhp-3; the interaction is required for their localization along paired chromosomes and stability, and for the formation of chiasma during meiotic recombination. In terms of tissue distribution, expressed in the germline.

The protein localises to the chromosome. Recruited co-dependently with zhp-3 to the synaptonemal complex between homologous chromosome pairs to regulate the formation and number of crossover events between homologs during meiotic recombination. In the early stages of pachytene, in complex with zhp-4, recruited by the zhp-1-zhp-2 heterodimer to designated crossover sites along the recombination intermediate to stabilize other pro-crossover factors such as rmh-1, msh-5 and cosa-1. This in turn facilitates crossover and promotes the formation of chiasma in each meiotic nucleus at the late pachytene stage of meiosis. Negatively regulates double strand break formation to promote formation of the crossover intermediate. The chain is Zip homologous protein 4 from Caenorhabditis elegans.